We begin with the raw amino-acid sequence, 226 residues long: Translation initiation factor 6 (226 aa).

Belongs to the eIF-6 family.

Binds to the 50S ribosomal subunit and prevents its association with the 30S ribosomal subunit to form the 70S initiation complex. The polypeptide is Translation initiation factor 6 (Haloquadratum walsbyi (strain DSM 16790 / HBSQ001)).